The chain runs to 232 residues: Large ribosomal subunit protein uL1 (232 aa).

Belongs to the universal ribosomal protein uL1 family. Part of the 50S ribosomal subunit.

In terms of biological role, binds directly to 23S rRNA. The L1 stalk is quite mobile in the ribosome, and is involved in E site tRNA release. Functionally, protein L1 is also a translational repressor protein, it controls the translation of the L11 operon by binding to its mRNA. This chain is Large ribosomal subunit protein uL1, found in Jannaschia sp. (strain CCS1).